The sequence spans 205 residues: N-(5'-phosphoribosyl)anthranilate isomerase (205 aa).

This sequence belongs to the TrpF family.

It catalyses the reaction N-(5-phospho-beta-D-ribosyl)anthranilate = 1-(2-carboxyphenylamino)-1-deoxy-D-ribulose 5-phosphate. Its pathway is amino-acid biosynthesis; L-tryptophan biosynthesis; L-tryptophan from chorismate: step 3/5. The protein is N-(5'-phosphoribosyl)anthranilate isomerase of Acidithiobacillus ferrooxidans (strain ATCC 23270 / DSM 14882 / CIP 104768 / NCIMB 8455) (Ferrobacillus ferrooxidans (strain ATCC 23270)).